A 55-amino-acid polypeptide reads, in one-letter code: Mitochondrial import receptor subunit TOM7 homolog (55 aa).

The Cytoplasmic portion of the chain corresponds to 1 to 20; the sequence is MVKLSKEAKQRLQQLFKGSQ. Residues 21–36 form a helical membrane-spanning segment; it reads FAIRWGFIPLVIYLGF. Over 37-55 the chain is Mitochondrial intermembrane; sequence KRGADPGMPEPTVLSLLWG.

This sequence belongs to the Tom7 family. In terms of assembly, forms part of the preprotein translocase complex of the outer mitochondrial membrane (TOM complex) which consists of at least 7 different proteins (TOMM5, TOMM6, TOMM7, TOMM20, TOMM22, TOMM40 and TOMM70).

The protein localises to the mitochondrion outer membrane. Its function is as follows. Required for assembly and stability of the TOM complex. Positive regulator of PRKN translocation to damaged mitochondria. Acts probably by stabilizing PINK1 on the outer membrane of depolarized mitochondria. This Homo sapiens (Human) protein is Mitochondrial import receptor subunit TOM7 homolog (TOMM7).